Reading from the N-terminus, the 287-residue chain is Ribosomal RNA small subunit methyltransferase I (287 aa).

The protein belongs to the methyltransferase superfamily. RsmI family.

The protein resides in the cytoplasm. The catalysed reaction is cytidine(1402) in 16S rRNA + S-adenosyl-L-methionine = 2'-O-methylcytidine(1402) in 16S rRNA + S-adenosyl-L-homocysteine + H(+). Its function is as follows. Catalyzes the 2'-O-methylation of the ribose of cytidine 1402 (C1402) in 16S rRNA. In Streptococcus pyogenes serotype M6 (strain ATCC BAA-946 / MGAS10394), this protein is Ribosomal RNA small subunit methyltransferase I.